Consider the following 687-residue polypeptide: Glycine--tRNA ligase beta subunit (687 aa).

The protein belongs to the class-II aminoacyl-tRNA synthetase family. As to quaternary structure, tetramer of two alpha and two beta subunits.

The protein localises to the cytoplasm. The catalysed reaction is tRNA(Gly) + glycine + ATP = glycyl-tRNA(Gly) + AMP + diphosphate. This is Glycine--tRNA ligase beta subunit from Neisseria gonorrhoeae (strain NCCP11945).